Reading from the N-terminus, the 142-residue chain is Gonadotropin subunit beta-2 (142 aa).

A signal peptide spans Met1–Gly24. Cystine bridges form between Cys30/Cys78, Cys44/Cys93, Cys47/Cys131, Cys55/Cys109, Cys59/Cys111, and Cys114/Cys121. Asn34 is a glycosylation site (N-linked (GlcNAc...) asparagine).

Belongs to the glycoprotein hormones subunit beta family. As to quaternary structure, heterodimer of an alpha and a beta chain.

The protein localises to the secreted. Involved in gametogenesis and steroidogenesis. The chain is Gonadotropin subunit beta-2 (cgbb) from Coregonus autumnalis (Arctic cisco).